A 106-amino-acid chain; its full sequence is Gibberellin-regulated protein 4 (106 aa).

The first 25 residues, 1-25, serve as a signal peptide directing secretion; that stretch reads MAKSYGAIFLLTLIVLFMLQTMVMA.

The protein belongs to the GASA family. In terms of processing, six disulfide bonds may be present. In terms of tissue distribution, expressed in flower buds, style, stamen filaments, vasculature of petals, root phloem, vasculature of cotyledons and rosette leaves and developing embryo.

It is found in the secreted. Gibberellin-regulated protein involved in the regulation of floral meristem and floral organ identity, and promotion of seed size and weight. May play a role in the promotion of gibberellin responses such as regulation of flowering under short-day conditions, seed germination and inhibition of gibberellin oxidase. Possesses redox activity in E.coli and may function in redox regulation in planta. This is Gibberellin-regulated protein 4 (GASA4) from Arabidopsis thaliana (Mouse-ear cress).